The following is a 91-amino-acid chain: MSRSIKKGPFADAHLLKKVDEQQAAEKKQVIKTWSRRSTIFPSFVGLTIAVYDGRKHVPVFVTEDMVGHKLGEFVPTRTFRGHKADDKASK.

It belongs to the universal ribosomal protein uS19 family.

Its function is as follows. Protein S19 forms a complex with S13 that binds strongly to the 16S ribosomal RNA. The polypeptide is Small ribosomal subunit protein uS19 (Lactobacillus delbrueckii subsp. bulgaricus (strain ATCC 11842 / DSM 20081 / BCRC 10696 / JCM 1002 / NBRC 13953 / NCIMB 11778 / NCTC 12712 / WDCM 00102 / Lb 14)).